A 383-amino-acid chain; its full sequence is TnpB-like protein ORF383B (383 aa).

Zn(2+)-binding residues include Cys-328, Cys-331, Cys-345, and Cys-348.

The protein in the N-terminal section; belongs to the transposase 2 family. In the C-terminal section; belongs to the transposase 35 family.

This Acidianus convivator (ATV) protein is TnpB-like protein ORF383B.